We begin with the raw amino-acid sequence, 589 residues long: Phosphoenolpyruvate carboxykinase [GTP] (589 aa).

Substrate-binding positions include arginine 75 and 207–209 (YGG). Lysine 216 and histidine 236 together coordinate Mn(2+). Serine 258 provides a ligand contact to substrate. Residue 259–264 (ASGKTN) coordinates GTP. Residue serine 260 is part of the active site. Residue aspartate 287 participates in Mn(2+) binding. 374-376 (NSR) serves as a coordination point for substrate. Residues arginine 376, arginine 407, and 500–503 (FAEN) each bind GTP.

The protein belongs to the phosphoenolpyruvate carboxykinase [GTP] family. Mn(2+) is required as a cofactor.

It localises to the cytoplasm. The enzyme catalyses oxaloacetate + GTP = phosphoenolpyruvate + GDP + CO2. Its pathway is carbohydrate biosynthesis; gluconeogenesis. Functionally, catalyzes the conversion of oxaloacetate (OAA) to phosphoenolpyruvate (PEP), the rate-limiting step in the metabolic pathway that produces glucose from lactate and other precursors derived from the citric acid cycle. This chain is Phosphoenolpyruvate carboxykinase [GTP], found in Thermoplasma volcanium (strain ATCC 51530 / DSM 4299 / JCM 9571 / NBRC 15438 / GSS1).